The following is a 399-amino-acid chain: Succinate--CoA ligase [ADP-forming] subunit beta (399 aa).

The 246-residue stretch at 9–254 (KAVLKSFGAP…TTEEDEKEIE (246 aa)) folds into the ATP-grasp domain. ATP contacts are provided by residues K46, 53–55 (GRG), E109, A112, and E117. N209 and D223 together coordinate Mg(2+). Residues N274 and 331 to 333 (GIM) contribute to the substrate site.

It belongs to the succinate/malate CoA ligase beta subunit family. In terms of assembly, heterotetramer of two alpha and two beta subunits. Mg(2+) is required as a cofactor.

The catalysed reaction is succinate + ATP + CoA = succinyl-CoA + ADP + phosphate. It carries out the reaction GTP + succinate + CoA = succinyl-CoA + GDP + phosphate. Its pathway is carbohydrate metabolism; tricarboxylic acid cycle; succinate from succinyl-CoA (ligase route): step 1/1. In terms of biological role, succinyl-CoA synthetase functions in the citric acid cycle (TCA), coupling the hydrolysis of succinyl-CoA to the synthesis of either ATP or GTP and thus represents the only step of substrate-level phosphorylation in the TCA. The beta subunit provides nucleotide specificity of the enzyme and binds the substrate succinate, while the binding sites for coenzyme A and phosphate are found in the alpha subunit. The protein is Succinate--CoA ligase [ADP-forming] subunit beta of Maricaulis maris (strain MCS10) (Caulobacter maris).